A 292-amino-acid chain; its full sequence is Elongation factor Ts (292 aa).

The interval 79-82 (TDFV) is involved in Mg(2+) ion dislocation from EF-Tu.

The protein belongs to the EF-Ts family.

It is found in the cytoplasm. Functionally, associates with the EF-Tu.GDP complex and induces the exchange of GDP to GTP. It remains bound to the aminoacyl-tRNA.EF-Tu.GTP complex up to the GTP hydrolysis stage on the ribosome. The sequence is that of Elongation factor Ts from Xanthomonas euvesicatoria pv. vesicatoria (strain 85-10) (Xanthomonas campestris pv. vesicatoria).